The sequence spans 1368 residues: DNA-directed RNA polymerase subunit beta (1368 aa).

Belongs to the RNA polymerase beta chain family. The RNAP catalytic core consists of 2 alpha, 1 beta, 1 beta' and 1 omega subunit. When a sigma factor is associated with the core the holoenzyme is formed, which can initiate transcription.

The enzyme catalyses RNA(n) + a ribonucleoside 5'-triphosphate = RNA(n+1) + diphosphate. In terms of biological role, DNA-dependent RNA polymerase catalyzes the transcription of DNA into RNA using the four ribonucleoside triphosphates as substrates. The protein is DNA-directed RNA polymerase subunit beta of Burkholderia cenocepacia (strain HI2424).